The chain runs to 516 residues: GMP synthase [glutamine-hydrolyzing] (516 aa).

Residues 7–199 enclose the Glutamine amidotransferase type-1 domain; the sequence is KIIILDFGSQ…VFGLCKCQAT (193 aa). Cys84 acts as the Nucleophile in catalysis. Catalysis depends on residues His173 and Glu175. The GMPS ATP-PPase domain maps to 200–391; it reads WTMQGFIESN…LGLPDEAVHR (192 aa). 227–233 is an ATP binding site; the sequence is SGGVDSS.

As to quaternary structure, homodimer.

The enzyme catalyses XMP + L-glutamine + ATP + H2O = GMP + L-glutamate + AMP + diphosphate + 2 H(+). It functions in the pathway purine metabolism; GMP biosynthesis; GMP from XMP (L-Gln route): step 1/1. In terms of biological role, catalyzes the synthesis of GMP from XMP. This Desulfotalea psychrophila (strain LSv54 / DSM 12343) protein is GMP synthase [glutamine-hydrolyzing].